Here is a 417-residue protein sequence, read N- to C-terminus: Gamma-glutamyl phosphate reductase (417 aa).

The protein belongs to the gamma-glutamyl phosphate reductase family.

Its subcellular location is the cytoplasm. It carries out the reaction L-glutamate 5-semialdehyde + phosphate + NADP(+) = L-glutamyl 5-phosphate + NADPH + H(+). It participates in amino-acid biosynthesis; L-proline biosynthesis; L-glutamate 5-semialdehyde from L-glutamate: step 2/2. Its function is as follows. Catalyzes the NADPH-dependent reduction of L-glutamate 5-phosphate into L-glutamate 5-semialdehyde and phosphate. The product spontaneously undergoes cyclization to form 1-pyrroline-5-carboxylate. The chain is Gamma-glutamyl phosphate reductase from Escherichia coli (strain K12 / MC4100 / BW2952).